The sequence spans 42 residues: CAKKRNWCGKTEDCCCPMKCVYAWYNEQGSCQSTISALWKKC.

4 disulfides stabilise this stretch: Cys-1/Cys-15, Cys-8/Cys-20, Cys-14/Cys-31, and Cys-16/Cys-42.

This sequence belongs to the neurotoxin 06 (delta-actx) family. As to expression, expressed by the venom gland.

It localises to the secreted. Its function is as follows. Inhibits tetrodotoxin-sensitive voltage-gated sodium channels (Nav) by binding to site 3. Slows the inactivation, and causes a prolongation of action potential duration resulting in repetitive firing in autonomic and motor nerve fibers. Does not depolarize the resting potential. Does not affect tetrodotoxin-resistant sodium channels. This lethal neurotoxin is active on both insect and mammalian voltage-gated sodium channels. Pan-neuronal expression in Drosophila is lethal but flies engineered to express the toxin only in pacemaker neurons have profound defects in circadian rhythm but a normal lifespan. The sequence is that of Delta-hexatoxin-Hv1a from Hadronyche versuta (Blue mountains funnel-web spider).